The following is a 415-amino-acid chain: Serine hydroxymethyltransferase 1 (415 aa).

Residues leucine 117 and 121 to 123 contribute to the (6S)-5,6,7,8-tetrahydrofolate site; that span reads GHL. Lysine 225 is modified (N6-(pyridoxal phosphate)lysine). Position 349-351 (349-351) interacts with (6S)-5,6,7,8-tetrahydrofolate; it reads SPF.

This sequence belongs to the SHMT family. In terms of assembly, homodimer. Requires pyridoxal 5'-phosphate as cofactor.

The protein localises to the cytoplasm. The enzyme catalyses (6R)-5,10-methylene-5,6,7,8-tetrahydrofolate + glycine + H2O = (6S)-5,6,7,8-tetrahydrofolate + L-serine. It participates in one-carbon metabolism; tetrahydrofolate interconversion. Its pathway is amino-acid biosynthesis; glycine biosynthesis; glycine from L-serine: step 1/1. In terms of biological role, catalyzes the reversible interconversion of serine and glycine with tetrahydrofolate (THF) serving as the one-carbon carrier. This reaction serves as the major source of one-carbon groups required for the biosynthesis of purines, thymidylate, methionine, and other important biomolecules. Also exhibits THF-independent aldolase activity toward beta-hydroxyamino acids, producing glycine and aldehydes, via a retro-aldol mechanism. This chain is Serine hydroxymethyltransferase 1, found in Sulfurimonas denitrificans (strain ATCC 33889 / DSM 1251) (Thiomicrospira denitrificans (strain ATCC 33889 / DSM 1251)).